The following is a 302-amino-acid chain: Probable 2-(5''-triphosphoribosyl)-3'-dephosphocoenzyme-A synthase 1 (302 aa).

It belongs to the CitG/MdcB family.

It carries out the reaction 3'-dephospho-CoA + ATP = 2'-(5''-triphospho-alpha-D-ribosyl)-3'-dephospho-CoA + adenine. The polypeptide is Probable 2-(5''-triphosphoribosyl)-3'-dephosphocoenzyme-A synthase 1 (Salmonella typhimurium (strain LT2 / SGSC1412 / ATCC 700720)).